Here is a 429-residue protein sequence, read N- to C-terminus: 3-phosphoshikimate 1-carboxyvinyltransferase (429 aa).

Residues Lys11, Ser12, and Arg16 each contribute to the 3-phosphoshikimate site. Lys11 contacts phosphoenolpyruvate. Positions 82 and 110 each coordinate phosphoenolpyruvate. Ser155, Gln157, Asp302, and Lys329 together coordinate 3-phosphoshikimate. Gln157 is a binding site for phosphoenolpyruvate. Residue Asp302 is the Proton acceptor of the active site. Phosphoenolpyruvate contacts are provided by Arg333 and Arg385.

It belongs to the EPSP synthase family. Monomer.

It is found in the cytoplasm. It catalyses the reaction 3-phosphoshikimate + phosphoenolpyruvate = 5-O-(1-carboxyvinyl)-3-phosphoshikimate + phosphate. The protein operates within metabolic intermediate biosynthesis; chorismate biosynthesis; chorismate from D-erythrose 4-phosphate and phosphoenolpyruvate: step 6/7. Catalyzes the transfer of the enolpyruvyl moiety of phosphoenolpyruvate (PEP) to the 5-hydroxyl of shikimate-3-phosphate (S3P) to produce enolpyruvyl shikimate-3-phosphate and inorganic phosphate. The polypeptide is 3-phosphoshikimate 1-carboxyvinyltransferase (Helicobacter pylori (strain HPAG1)).